We begin with the raw amino-acid sequence, 203 residues long: Ribosomal RNA small subunit methyltransferase G (203 aa).

Residues G75, L80, 126–127 (VE), and R141 contribute to the S-adenosyl-L-methionine site.

It belongs to the methyltransferase superfamily. RNA methyltransferase RsmG family.

It is found in the cytoplasm. The catalysed reaction is guanosine(527) in 16S rRNA + S-adenosyl-L-methionine = N(7)-methylguanosine(527) in 16S rRNA + S-adenosyl-L-homocysteine. Functionally, specifically methylates the N7 position of guanine in position 527 of 16S rRNA. The polypeptide is Ribosomal RNA small subunit methyltransferase G (Ruthia magnifica subsp. Calyptogena magnifica).